A 348-amino-acid chain; its full sequence is Small ribosomal subunit protein mS45 (348 aa).

Low complexity predominate over residues 37 to 57 (SCSSSSPQSSQPTTHQQQCSS). The segment at 37–63 (SCSSSSPQSSQPTTHQQQCSSFSTTAP) is disordered.

The protein belongs to the mitochondrion-specific ribosomal protein mS45 family. In terms of assembly, component of the mitochondrial small ribosomal subunit (mt-SSU). Mature N.crassa 74S mitochondrial ribosomes consist of a small (37S) and a large (54S) subunit. The 37S small subunit contains a 16S ribosomal RNA (16S mt-rRNA) and 32 different proteins. The 54S large subunit contains a 23S rRNA (23S mt-rRNA) and 42 different proteins.

The protein resides in the mitochondrion. Component of the mitochondrial ribosome (mitoribosome), a dedicated translation machinery responsible for the synthesis of mitochondrial genome-encoded proteins, including at least some of the essential transmembrane subunits of the mitochondrial respiratory chain. The mitoribosomes are attached to the mitochondrial inner membrane and translation products are cotranslationally integrated into the membrane. This is Small ribosomal subunit protein mS45 (mrps35) from Neurospora crassa (strain ATCC 24698 / 74-OR23-1A / CBS 708.71 / DSM 1257 / FGSC 987).